The chain runs to 525 residues: GMP synthase [glutamine-hydrolyzing] (525 aa).

In terms of domain architecture, Glutamine amidotransferase type-1 spans 8–207; that stretch reads KILILDFGSQ…ALDICGCAAN (200 aa). Cys-85 (nucleophile) is an active-site residue. Catalysis depends on residues His-181 and Glu-183. Residues 208–400 enclose the GMPS ATP-PPase domain; the sequence is WKPSSIIEDA…LGLPYNMLYR (193 aa). Residue 235–241 participates in ATP binding; it reads SGGVDSS.

Homodimer.

The enzyme catalyses XMP + L-glutamine + ATP + H2O = GMP + L-glutamate + AMP + diphosphate + 2 H(+). The protein operates within purine metabolism; GMP biosynthesis; GMP from XMP (L-Gln route): step 1/1. In terms of biological role, catalyzes the synthesis of GMP from XMP. The sequence is that of GMP synthase [glutamine-hydrolyzing] from Shewanella baltica (strain OS155 / ATCC BAA-1091).